We begin with the raw amino-acid sequence, 728 residues long: FAS1 domain-containing protein fsc1 (728 aa).

An N-terminal signal peptide occupies residues 1–21; that stretch reads MNLQFRLYLLFILLFISFANG. Residues 22–670 are Vacuolar-facing; that stretch reads KNEYEDKSTS…TKRQNRWRIT (649 aa). FAS1 domains follow at residues 29–151 and 154–285; these read STSI…DNII and PPPA…SSLI. Residue Asn-89 is glycosylated (N-linked (GlcNAc...) asparagine). 2 N-linked (GlcNAc...) asparagine glycosylation sites follow: Asn-404 and Asn-501. Residues 671 to 691 form a helical membrane-spanning segment; that stretch reads FISISGLLLSVGICVLCYKIY. Topologically, residues 692–728 are cytoplasmic; sequence FKFFRNRFMNQGEREPLLAPADSDTMAGRRNSSSLSV.

The protein resides in the vacuole membrane. Functionally, required for the fusion of autophagosomes with the vacuole. The chain is FAS1 domain-containing protein fsc1 (fsc1) from Schizosaccharomyces pombe (strain 972 / ATCC 24843) (Fission yeast).